A 241-amino-acid polypeptide reads, in one-letter code: Small ribosomal subunit protein uS2 (241 aa).

The protein belongs to the universal ribosomal protein uS2 family.

This Enterobacter sp. (strain 638) protein is Small ribosomal subunit protein uS2.